A 379-amino-acid chain; its full sequence is Chaperone protein DnaJ (379 aa).

The region spanning 5-69 is the J domain; the sequence is DYYEVLGISK…NKRATIDQFG (65 aa). The CR-type zinc-finger motif lies at 136–218; sequence GTTKEISIRK…CHGKGTENKT (83 aa). C149, C152, C166, C169, C192, C195, C206, and C209 together coordinate Zn(2+). CXXCXGXG motif repeat units lie at residues 149 to 156, 166 to 173, 192 to 199, and 206 to 213; these read CETCHGDG, CSYCNGAG, CPKCNGSG, and CPTCHGKG.

Belongs to the DnaJ family. In terms of assembly, homodimer. Requires Zn(2+) as cofactor.

Its subcellular location is the cytoplasm. Functionally, participates actively in the response to hyperosmotic and heat shock by preventing the aggregation of stress-denatured proteins and by disaggregating proteins, also in an autonomous, DnaK-independent fashion. Unfolded proteins bind initially to DnaJ; upon interaction with the DnaJ-bound protein, DnaK hydrolyzes its bound ATP, resulting in the formation of a stable complex. GrpE releases ADP from DnaK; ATP binding to DnaK triggers the release of the substrate protein, thus completing the reaction cycle. Several rounds of ATP-dependent interactions between DnaJ, DnaK and GrpE are required for fully efficient folding. Also involved, together with DnaK and GrpE, in the DNA replication of plasmids through activation of initiation proteins. The protein is Chaperone protein DnaJ of Staphylococcus aureus.